The chain runs to 297 residues: CASP-like protein 2U8 (297 aa).

Residues 1–10 are Cytoplasmic-facing; that stretch reads MLELYEKRRA. A helical membrane pass occupies residues 11–31; that stretch reads LLLLRLAAMFLSLAALLITVL. The Extracellular portion of the chain corresponds to 32–64; it reads NREDGFFSINVFGSPQPILAKATADFTLVKGLK. A helical membrane pass occupies residues 65–85; it reads FFAGAMGIVAGYSFLQLAIAM. At 86–101 the chain is on the cytoplasmic side; the sequence is ASIFSGAPSILGGKRM. A helical membrane pass occupies residues 102-122; it reads AWLCFVGDMTASHLCAAAAAV. Over 123-148 the chain is Extracellular; sequence SAQLAYLGKRGAPMWSAVCTYFSHYC. The chain crosses the membrane as a helical span at residues 149–169; it reads LVFGLAVILAFLATLAALLVA. Residues 170–297 lie on the Cytoplasmic side of the membrane; sequence SISSYHLAYD…RVLEMETPCK (128 aa).

It belongs to the Casparian strip membrane proteins (CASP) family. As to quaternary structure, homodimer and heterodimers.

It is found in the cell membrane. The protein is CASP-like protein 2U8 of Selaginella moellendorffii (Spikemoss).